The sequence spans 228 residues: Somatolactin (228 aa).

The N-terminal stretch at 1-24 (MFSIRMNKVLQGFVCLMLTHRIVG) is a signal peptide. Cystine bridges form between cysteine 29–cysteine 38, cysteine 88–cysteine 200, and cysteine 217–cysteine 225. Residues asparagine 141 and asparagine 177 are each glycosylated (N-linked (GlcNAc...) asparagine).

The protein belongs to the somatotropin/prolactin family.

It is found in the secreted. The sequence is that of Somatolactin from Anguilla anguilla (European freshwater eel).